The primary structure comprises 95 residues: DNA-binding protein CENSYa_1764 (95 aa).

The disordered stretch occupies residues 1-21; that stretch reads MSYTDPDDSLPEHVPGEAEMS.

The protein belongs to the PDCD5 family.

The sequence is that of DNA-binding protein CENSYa_1764 from Cenarchaeum symbiosum (strain A).